Here is a 498-residue protein sequence, read N- to C-terminus: ATP synthase subunit beta, chloroplastic (498 aa).

172 to 179 (GGAGVGKT) serves as a coordination point for ATP.

The protein belongs to the ATPase alpha/beta chains family. As to quaternary structure, F-type ATPases have 2 components, CF(1) - the catalytic core - and CF(0) - the membrane proton channel. CF(1) has five subunits: alpha(3), beta(3), gamma(1), delta(1), epsilon(1). CF(0) has four main subunits: a(1), b(1), b'(1) and c(9-12).

It is found in the plastid. Its subcellular location is the chloroplast thylakoid membrane. The enzyme catalyses ATP + H2O + 4 H(+)(in) = ADP + phosphate + 5 H(+)(out). Its function is as follows. Produces ATP from ADP in the presence of a proton gradient across the membrane. The catalytic sites are hosted primarily by the beta subunits. The protein is ATP synthase subunit beta, chloroplastic of Triticum aestivum (Wheat).